The following is a 95-amino-acid chain: Translation initiation factor IF-1 (95 aa).

An S1-like domain is found at 1-72; sequence MAKEELIEMD…TKARITYRHK (72 aa). Residues 70–95 form a disordered region; the sequence is RHKVGGPPGPVTGGGNRPPPRQPRRR. A compositionally biased stretch (pro residues) spans 86–95; it reads RPPPRQPRRR.

It belongs to the IF-1 family. Component of the 30S ribosomal translation pre-initiation complex which assembles on the 30S ribosome in the order IF-2 and IF-3, IF-1 and N-formylmethionyl-tRNA(fMet); mRNA recruitment can occur at any time during PIC assembly.

The protein resides in the cytoplasm. One of the essential components for the initiation of protein synthesis. Stabilizes the binding of IF-2 and IF-3 on the 30S subunit to which N-formylmethionyl-tRNA(fMet) subsequently binds. Helps modulate mRNA selection, yielding the 30S pre-initiation complex (PIC). Upon addition of the 50S ribosomal subunit IF-1, IF-2 and IF-3 are released leaving the mature 70S translation initiation complex. The chain is Translation initiation factor IF-1 from Rhodospirillum rubrum (strain ATCC 11170 / ATH 1.1.1 / DSM 467 / LMG 4362 / NCIMB 8255 / S1).